The sequence spans 260 residues: MTRHWPWEVSLRMENEHVCGGALIDPSWVVTAAHCIQGTKEYSVVLGTSKLQPMNFSRALWVPVRDIIMHPKYWGRAFIMGDVALVHLQTPVTFSEYVQPICLPEPNFNLKVGTQCWVTGWSQVKQRFSANSMLTPELQEAEVFIMDNKRCDRHYKKSFFPPVVPLVLGDMICATNYGENLCYGDSGGPLACEVEGRWILAGVLSWEKACVKAQNPGVYTRITKYTKWIKKQMSNGAFSGPCASACLLFLCWLLQPQMGS.

Residues 1 to 234 enclose the Peptidase S1 domain; the sequence is MTRHWPWEVS…YTKWIKKQMS (234 aa). Cysteine 19 and cysteine 35 are disulfide-bonded. The active-site Charge relay system is the histidine 34. N-linked (GlcNAc...) asparagine glycosylation occurs at asparagine 55. Catalysis depends on aspartate 82, which acts as the Charge relay system. 3 cysteine pairs are disulfide-bonded: cysteine 116–cysteine 192, cysteine 151–cysteine 173, and cysteine 182–cysteine 210. Serine 186 (charge relay system) is an active-site residue.

It belongs to the peptidase S1 family.

This is Putative serine protease 45 from Homo sapiens (Human).